We begin with the raw amino-acid sequence, 62 residues long: Coiled-coil domain-containing protein YLR146W-A (62 aa).

A coiled-coil region spans residues 14-49 (EHARMLQNEIQQLFAQLRDTNSQIRCDLNEFEQIKE).

In Saccharomyces cerevisiae (strain ATCC 204508 / S288c) (Baker's yeast), this protein is Coiled-coil domain-containing protein YLR146W-A.